The following is a 267-amino-acid chain: Undecaprenyl-diphosphatase (267 aa).

The next 7 helical transmembrane spans lie at 4–24 (LYALILGIIEGLTEFLPISST), 41–61 (FWKSFLIIIQLGSILAVIFVF), 69–89 (LDIWLKLAVGFFPTGVIGLFV), 96–116 (LFNGWVVVGMLIFGGVVFILI), 173–193 (AAEFSFLLAIPTMIIATAYSI), 207–227 (IPLGIGFITAFIVAVLVIKFF), and 239–259 (FGIYRIILGFVFFYLYYSGIL).

This sequence belongs to the UppP family.

The protein localises to the cell inner membrane. The enzyme catalyses di-trans,octa-cis-undecaprenyl diphosphate + H2O = di-trans,octa-cis-undecaprenyl phosphate + phosphate + H(+). Its function is as follows. Catalyzes the dephosphorylation of undecaprenyl diphosphate (UPP). Confers resistance to bacitracin. This chain is Undecaprenyl-diphosphatase, found in Campylobacter jejuni subsp. jejuni serotype O:2 (strain ATCC 700819 / NCTC 11168).